A 583-amino-acid polypeptide reads, in one-letter code: Sensor protein SrrB (583 aa).

Topologically, residues 1–11 (MMSRLNSVVIK) are cytoplasmic. A helical membrane pass occupies residues 12 to 32 (LWLTIILIVTTVLILLSIALI). The Extracellular portion of the chain corresponds to 33–174 (TFMQYYFTQE…SIEDTNNAIT (142 aa)). A helical membrane pass occupies residues 175–195 (IITIITAVIFLTITTVFAFFL). Over 196-583 (SSRITKPLRR…TFIIKLPKPE (388 aa)) the chain is Cytoplasmic. Residues 197–249 (SRITKPLRRLRDQATRVSEGDYSYKPSVTTKDEIGQLSQAFNQMSTEIEEHVD) enclose the HAMP domain. Residues 366 to 583 (NVSHELRTPI…TFIIKLPKPE (218 aa)) form the Histidine kinase domain. Phosphohistidine; by autocatalysis is present on H369.

It localises to the cell membrane. The enzyme catalyses ATP + protein L-histidine = ADP + protein N-phospho-L-histidine.. Functionally, member of the two-component regulatory system SrrA/SrrB, which is involved in the global regulation of staphylococcal virulence factors in response to environmental oxygen levels as well as biofilm formation. Also plays an essential role in host-derived nitric oxide resistance by regulating hmp/flavohemoglobin, an enzyme that detoxifies nitric oxide by converting it to nitrate. Functions as a sensor protein kinase which is autophosphorylated at a histidine residue and transfers its phosphate group to SrrA. In turn, SrrA binds to the upstream promoter regions of the target genes to positively and negatively regulate their expression. The polypeptide is Sensor protein SrrB (srrB) (Staphylococcus aureus).